Consider the following 328-residue polypeptide: NADH:quinone reductase (328 aa).

Residues 22-24, T75, K124, A150, 178-180, and 201-202 each bind FMN; these read GMQ, SGG, and GT.

This sequence belongs to the nitronate monooxygenase family. In terms of assembly, monomer. It depends on FMN as a cofactor.

The catalysed reaction is a quinone + NADH + H(+) = a quinol + NAD(+). Catalyzes the NADH-dependent reduction of a broad spectrum of quinone substrates, generating the corresponding hydroquinones. Highly prefers NADH to NADPH as a reducing substrate. Also displays a small NADH oxidase activity. Does not exhibit nitronate monooxygenase activity; is inactive against propionate 3-nitronate, 3-nitropropionate, nitroethane, 1-nitropropane, 2-nitropropane, and the anionic forms ethylnitronate, propyl-1-nitronate, and propyl-2-nitronate. Has no azoreductase activity since it is not able to reduce the azo dye methyl red with NADH. May be required to maintain an appropriate [NAD(+)]/[NADH] ratio for the catabolism of fatty acids in P.aeruginosa PAO1. This is NADH:quinone reductase from Pseudomonas aeruginosa (strain ATCC 15692 / DSM 22644 / CIP 104116 / JCM 14847 / LMG 12228 / 1C / PRS 101 / PAO1).